The chain runs to 720 residues: MTEKVKQHAAPVTGSDEIDIGRLVGTVIEARWWVIGITAVFALCAVVYTFFATPIYSADALVQIEQSSGNSLVQDIGSALANKPPASDAEIQLIRSRLVLGKTVDDLDLDIAVSKNTFPIFGAGWDRLMGRQNETVKVTTFNRPKEMEDQVFTLNVLDNKNYTLSSDGGFSARGQAGQILKKEGVTLMVEAIHARPGSEFTVTKYSTLGMINQLQNSLTVTENGKDAGVLSLTYTGEDREQIRDILNSIARNYQEQNIERKSAEASKSLAFLAQQLPEVRSRLDVAENKLNAFRQDKDSVDLPLEAKAVLDSMVNIDAQLNELTFKEAEISKLYTKVHPAYRTLLEKRQALEDEKAKLNGRVTAMPKTQQEIVRLTRDVESGQQVYMQLLNKEQELKITEASTVGDVRIVDPAITQPGVLKPKKGLIILGAIILGLMLSIVGVLLRSLFNRGIESPQVLEEHGISVYASIPLSEWQKARDSVKTIKGIKRYKQSQLLAVGNPTDLAIEAIRSLRTSLHFAMMQAQNNVLMMTGVSPSIGKTFVCANLAAVISQTNKRVLLIDCDMRKGYTHELLGTNNVNGLSEILIGQGDITTAAKPTSIAKFDLIPRGQVPPNPSELLMSERFAELVNWASKNYDLVLIDTPPILAVTDAAIVGRHVGTTLMVARYAVNTLKEVETSLSRFEQNGIPVKGVILNSIFRRASAYQDYGYYEYEYKSDAK.

Residues methionine 1–arginine 31 lie on the Cytoplasmic side of the membrane. The helical transmembrane segment at tryptophan 32–alanine 52 threads the bilayer. At threonine 53 to lysine 424 the chain is on the periplasmic side. Residues glycine 425–leucine 445 form a helical membrane-spanning segment. The Cytoplasmic segment spans residues arginine 446–lysine 720. Tyrosine 569 bears the Phosphotyrosine; by autocatalysis mark. Phosphotyrosine is present on residues tyrosine 708, tyrosine 710, tyrosine 711, tyrosine 713, and tyrosine 715.

The protein belongs to the etk/wzc family. Post-translationally, autophosphorylated. Seems to be phosphorylated through a cooperative two-step mechanism. First, Tyr-569 is phosphorylated in an intramolecular reaction that generates a significant increase of protein kinase activity. Then Tyr-708, Tyr-710, Tyr-711, Tyr-713 and Tyr-715 are phosphorylated in an intermolecular Tyr-569-dependent reaction.

Its subcellular location is the cell inner membrane. It carries out the reaction L-tyrosyl-[protein] + ATP = O-phospho-L-tyrosyl-[protein] + ADP + H(+). Its pathway is glycan metabolism; exopolysaccharide biosynthesis. Dephosphorylated and activated by wzb. Required for the extracellular polysaccharide colanic acid synthesis. The autophosphorylated form is inactive. Probably involved in the export of colanic acid from the cell to medium. Phosphorylates udg. The chain is Tyrosine-protein kinase wzc (wzc) from Escherichia coli O157:H7.